Reading from the N-terminus, the 332-residue chain is MRPILLSGHERALTQVKYNGDGDIIFSVSKDHVDADSHNGERIGTYHGHQGALWTVDVNPDSTLLATGGADNTLRLWEVQTGKLLHTWEFNTSIKRCEFSPDGRQLLGVTEKRSGHLSTIVVYEINPDPEAKQSDEQVLRIVCDESKATVAGFSYLAKYIISGHEDGSVTQWDGKTGELLSSNYDVHEPDMQGYALATKHVRFDANRVQLVDVEDLTVLKSYVTDTPLNSAAITPVKDYVILGGGQAAMDVTTTSARQGKFEARFYHKIFMEEIGRVRGHFGPLNYVAVHPQGTGYCSGGEDGYVRVHHFDKPYFDFMYEVEREAAREQANL.

WD repeat units follow at residues 8–47 (GHER…GTYH), 48–87 (GHQG…LLHT), 144–182 (DESK…LLSS), and 279–318 (GHFG…FDFM).

This sequence belongs to the eIF-3 subunit I family. In terms of assembly, component of the eukaryotic translation initiation factor 3 (eIF-3) complex.

The protein localises to the cytoplasm. Functionally, component of the eukaryotic translation initiation factor 3 (eIF-3) complex, which is involved in protein synthesis of a specialized repertoire of mRNAs and, together with other initiation factors, stimulates binding of mRNA and methionyl-tRNAi to the 40S ribosome. The eIF-3 complex specifically targets and initiates translation of a subset of mRNAs involved in cell proliferation. This Phaeosphaeria nodorum (strain SN15 / ATCC MYA-4574 / FGSC 10173) (Glume blotch fungus) protein is Eukaryotic translation initiation factor 3 subunit I.